The sequence spans 142 residues: Large ribosomal subunit protein uL16 (142 aa).

Belongs to the universal ribosomal protein uL16 family. Part of the 50S ribosomal subunit.

In terms of biological role, binds 23S rRNA and is also seen to make contacts with the A and possibly P site tRNAs. The sequence is that of Large ribosomal subunit protein uL16 from Mycoplasmopsis pulmonis (strain UAB CTIP) (Mycoplasma pulmonis).